A 471-amino-acid polypeptide reads, in one-letter code: Rho GTPase-activating protein 15 (471 aa).

Residues 1–20 (MQKSTNSDIPVETLNPTRQG) form a disordered region. Ser-43 carries the post-translational modification Phosphoserine. The PH domain maps to 79–189 (MVEKEGYLQK…WFHAIKNAID (111 aa)). Phosphoserine is present on residues Ser-196, Ser-199, and Ser-243. A Rho-GAP domain is found at 281 to 470 (SHLHTLCERE…LMLSAYDQIF (190 aa)).

It is found in the cytoplasm. It localises to the membrane. Functionally, GTPase activator for the Rho-type GTPases by converting them to an inactive GDP-bound state. Has activity toward RAC1. Overexpression results in an increase in actin stress fibers and cell contraction. This is Rho GTPase-activating protein 15 (ARHGAP15) from Bos taurus (Bovine).